A 491-amino-acid polypeptide reads, in one-letter code: MASFQIHQDMSNKENPGIKIPAGVKNTKQPLAVIGGKAEKNALAPRANFAVLNGNNNVPRPAGKVQVFRDVRNLNVDENVEYGAKKSNVVPVVEQFKTFSVYEDNNDTQVAPSGKSLASLVDKENHDVKFGAGQKELVDYDLDSTPMSVTDVQSPMSVDRSILGVIQSSDISVGTETGVSPTGRVKELPPRNDRQRFLEVVQYQMDILEYFRESEKKHRPKPLYMRRQKDISHNMRSILIDWLVEVSEEYKLDTETLYLSVFYLDRFLSQMAVVRSKLQLVGTAAMYIAAKYEEIYPPEVGEFVFLTDDSYTKAQVLRMEQVILKILSFDLCTPTAYVFINTYAVLCDMPEKLKYMTLYISELSLMEGETYLQYLPSLMSSASVALARHILGMEMWTPRLEEITTYKLEDLKTVVLHLCHTHKTAKELNTQAMREKYNRDTYKKVAMMESVEMSKDDFDQLCEAYNCKQKEDEHQQPDINTKSNVNLFYKF.

The disordered stretch occupies residues 1 to 21 (MASFQIHQDMSNKENPGIKIP). Residues 206-332 (DILEYFRESE…ILKILSFDLC (127 aa)) form the Cyclin N-terminal domain.

It belongs to the cyclin family. Cyclin AB subfamily. Component of the Frs-CycA-Cdk1 complex composed of CycA, Cdk1 and Z600. Interacts (via C-terminus) with Z600. Interacts with otu and (via C-terminus) with bam; the interaction stabilizes CycA by negatively regulating its ubiquitination. Post-translationally, ubiquitinated. Ubiquitination state is negatively regulated by a deubiquitinase complex made up of bam and otu.

Essential for the control of the cell cycle at the G2/M (mitosis) transition. Interacts with the Cdk1 and Cdk2 protein kinases to form MPF. G2/M cyclins accumulate steadily during G2 and are abruptly destroyed at mitosis. The chain is G2/mitotic-specific cyclin-A (CycA) from Drosophila melanogaster (Fruit fly).